The following is a 184-amino-acid chain: UPF0301 protein ABSDF3201 (184 aa).

Belongs to the UPF0301 (AlgH) family.

The polypeptide is UPF0301 protein ABSDF3201 (Acinetobacter baumannii (strain SDF)).